The following is a 422-amino-acid chain: MLQWRRRHCCFAKMTWSPKRSLLRTPLTGVLSLVFLFAMFLFFNHHDWLPGRPGFKENPVTYTFRGFRSTKSETNHSSLRTIWKEVAPQTLRPHTASNSSNTELSPQGVTGLQNTLSANGSIYNEKGTGHPNSYHFKYIINEPEKCQEKSPFLILLIAAEPGQIEARRAIRQTWGNETLAPGIQIIRVFLLGISIKLNGYLQHAIQEESRQYHDIIQQEYLDTYYNLTIKTLMGMNWVATYCPHTPYVMKTDSDMFVNTEYLIHKLLKPDLPPRHNYFTGYLMRGYAPNRNKDSKWYMPPDLYPSERYPVFCSGTGYVFSGDLAEKIFKVSLGIRRLHLEDVYVGICLAKLRVDPVPPPNEFVFNHWRVSYSSCKYSHLITSHQFQPSELIKYWNHLQQNKHNACANAAKEKAGRYRHRKLH.

The Cytoplasmic segment spans residues 1–20; that stretch reads MLQWRRRHCCFAKMTWSPKR. Residues 21-43 form a helical; Signal-anchor for type II membrane protein membrane-spanning segment; sequence SLLRTPLTGVLSLVFLFAMFLFF. Residues 44 to 422 are Lumenal-facing; that stretch reads NHHDWLPGRP…AGRYRHRKLH (379 aa). Residues asparagine 75, asparagine 98, asparagine 119, asparagine 176, and asparagine 226 are each glycosylated (N-linked (GlcNAc...) asparagine). The segment at 91–110 is disordered; the sequence is LRPHTASNSSNTELSPQGVT. Residues 95–110 are compositionally biased toward polar residues; that stretch reads TASNSSNTELSPQGVT.

It belongs to the glycosyltransferase 31 family. Mn(2+) is required as a cofactor. Detected in brain and heart.

The protein resides in the golgi apparatus membrane. The enzyme catalyses an N-acetyl-beta-D-glucosaminyl derivative + UDP-alpha-D-galactose = a beta-D-galactosyl-(1-&gt;3)-N-acetyl-beta-D-glucosaminyl derivative + UDP + H(+). It carries out the reaction a beta-D-GlcNAc-(1-&gt;3)-beta-D-Gal-(1-&gt;4)-beta-D-Glc-(1&lt;-&gt;1)-Cer(d18:1(4E)) + UDP-alpha-D-galactose = a beta-D-Gal-(1-&gt;3)-beta-D-GlcNAc-(1-&gt;3)-beta-D-Gal-(1-&gt;4)-beta-D-Glc-(1&lt;-&gt;1')-Cer(d18:1(4E)) + UDP + H(+). The catalysed reaction is a neolactoside IV(3)-beta-GlcNAc-nLc4Cer(d18:1(4E)) + UDP-alpha-D-galactose = a neolactoside IV(3)-beta-[Gal-beta-(1-&gt;3)-GlcNAc]-nLc4Cer(d18:1(4E)) + UDP + H(+). The protein operates within protein modification; protein glycosylation. Its function is as follows. Beta-1,3-galactosyltransferase that transfers galactose from UDP-galactose to substrates with a terminal beta-N-acetylglucosamine (beta-GlcNAc) residue. Can also utilize substrates with a terminal galactose residue, albeit with lower efficiency. Involved in the biosynthesis of the carbohydrate moieties of glycolipids and glycoproteins. The chain is Beta-1,3-galactosyltransferase 2 from Mus musculus (Mouse).